We begin with the raw amino-acid sequence, 223 residues long: MTSEVIEDEKQFYSKAKTYWKQIPPTVDGMLGGYGHISNIDLNSSRKFLQRFLREGPNKTGTSCALDCGAGIGRITKRLLLPLFRVVDMVDVTEDFLAKAKTYLGEEGKRVRNYFCCGLQDFSPEPSSYDVIWIQWVIGHLTDQHLAEFLRRCRRGLRPNGIIVIKDNMAQEGVILDDVDSSVCRDLEVVRRIIRSAGLSLLAEERQENLPDEIYHVYSFALR.

At methionine 1 the chain carries N-acetylmethionine. Threonine 2 is modified (N-acetylthreonine; in N-terminal Xaa-Pro-Lys N-methyltransferase 1, N-terminally processed). S-adenosyl-L-methionine is bound by residues glycine 69, arginine 74, 91–93 (DVT), 119–120 (LQ), and glutamine 135.

Belongs to the methyltransferase superfamily. NTM1 family.

The protein resides in the nucleus. The enzyme catalyses N-terminal L-alanyl-L-prolyl-L-lysyl-[protein] + 3 S-adenosyl-L-methionine = N-terminal N,N,N-trimethyl-L-alanyl-L-prolyl-L-lysyl-[protein] + 3 S-adenosyl-L-homocysteine + 3 H(+). The catalysed reaction is N-terminal L-seryl-L-prolyl-L-lysyl-[protein] + 3 S-adenosyl-L-methionine = N-terminal N,N,N-trimethyl-L-seryl-L-prolyl-L-lysyl-[protein] + 3 S-adenosyl-L-homocysteine + 3 H(+). It catalyses the reaction N-terminal L-prolyl-L-prolyl-L-lysyl-[protein] + 2 S-adenosyl-L-methionine = N-terminal N,N-dimethyl-L-prolyl-L-prolyl-L-lysyl-[protein] + 2 S-adenosyl-L-homocysteine + 2 H(+). Its function is as follows. Distributive alpha-N-methyltransferase that methylates the N-terminus of target proteins containing the N-terminal motif [Ala/Gly/Pro/Ser]-Pro-Lys when the initiator Met is cleaved. Specifically catalyzes mono-, di- or tri-methylation of the exposed alpha-amino group of the Ala, Gly or Ser residue in the [Ala/Gly/Ser]-Pro-Lys motif and mono- or di-methylation of Pro in the Pro-Pro-Lys motif. Some of the substrates may be primed by NTMT2-mediated monomethylation. Catalyzes the trimethylation of the N-terminal Gly in CENPA (after removal of Met-1). Responsible for the N-terminal methylation of KLHL31, MYL2, MYL3, RB1, RCC1, RPL23A and SET. Required during mitosis for normal bipolar spindle formation and chromosome segregation via its action on RCC1. The polypeptide is N-terminal Xaa-Pro-Lys N-methyltransferase 1 (Ntmt1) (Rattus norvegicus (Rat)).